We begin with the raw amino-acid sequence, 172 residues long: Adenine phosphoribosyltransferase (172 aa).

This sequence belongs to the purine/pyrimidine phosphoribosyltransferase family. Homodimer.

Its subcellular location is the cytoplasm. It carries out the reaction AMP + diphosphate = 5-phospho-alpha-D-ribose 1-diphosphate + adenine. It participates in purine metabolism; AMP biosynthesis via salvage pathway; AMP from adenine: step 1/1. In terms of biological role, catalyzes a salvage reaction resulting in the formation of AMP, that is energically less costly than de novo synthesis. This chain is Adenine phosphoribosyltransferase, found in Anaeromyxobacter dehalogenans (strain 2CP-C).